Reading from the N-terminus, the 301-residue chain is Cilia- and flagella-associated protein 161 (301 aa).

Residues 269–301 (GNPRDASSSMLDLPKPPTEDTRAMEQAMGLDTQ) form a disordered region.

In terms of assembly, microtubule inner protein component of sperm flagellar doublet microtubules. Expressed in airway epithelial cells.

The protein localises to the cytoplasm. The protein resides in the cytoskeleton. It localises to the cilium axoneme. It is found in the flagellum axoneme. Its function is as follows. Microtubule inner protein (MIP) part of the dynein-decorated doublet microtubules (DMTs) in cilia axoneme, which is required for motile cilia beating. This chain is Cilia- and flagella-associated protein 161, found in Homo sapiens (Human).